Consider the following 378-residue polypeptide: GTP cyclohydrolase-2 (378 aa).

Residues 1 to 180 are DHBP synthase-like; that stretch reads MEEVSSHVKS…IKDMIEFRIK (180 aa). The segment at 181–378 is GTP cyclohydrolase II; sequence SEKIVERVIE…KMGHLICFND (198 aa). 229-233 is a binding site for GTP; that stretch reads RIHSE. The Zn(2+) site is built by cysteine 234, cysteine 245, and cysteine 247. GTP contacts are provided by residues glutamine 250, 273 to 275, and threonine 295; that span reads EGR. Aspartate 307 acts as the Proton acceptor in catalysis. Arginine 309 serves as the catalytic Nucleophile. Positions 330 and 335 each coordinate GTP.

The protein in the N-terminal section; belongs to the DHBP synthase family. It in the C-terminal section; belongs to the GTP cyclohydrolase II family. Requires Zn(2+) as cofactor.

The catalysed reaction is GTP + 4 H2O = 2,5-diamino-6-hydroxy-4-(5-phosphoribosylamino)-pyrimidine + formate + 2 phosphate + 3 H(+). It participates in cofactor biosynthesis; riboflavin biosynthesis; 5-amino-6-(D-ribitylamino)uracil from GTP: step 1/4. Its function is as follows. Catalyzes the conversion of GTP to 2,5-diamino-6-ribosylamino-4(3H)-pyrimidinone 5'-phosphate (DARP), formate and pyrophosphate. In Archaeoglobus fulgidus (strain ATCC 49558 / DSM 4304 / JCM 9628 / NBRC 100126 / VC-16), this protein is GTP cyclohydrolase-2 (ribA).